The primary structure comprises 497 residues: tRNA-2-methylthio-N(6)-dimethylallyladenosine synthase (497 aa).

The tract at residues 1-50 (MTGTSNIPTHGKEHKDAPALLPLPAPNPHHTHAAHPGDPSHDRPPSRGKL) is disordered. In terms of domain architecture, MTTase N-terminal spans 48–165 (GKLFIKTHGC…LPDMIRARRE (118 aa)). Residues cysteine 57, cysteine 94, cysteine 128, cysteine 202, cysteine 206, and cysteine 209 each contribute to the [4Fe-4S] cluster site. In terms of domain architecture, Radical SAM core spans 188–430 (RAEGPSAFVS…QKHINAYAAD (243 aa)). Residues 433–496 (KRMIGTVQTV…TNSLRGRVHT (64 aa)) enclose the TRAM domain.

It belongs to the methylthiotransferase family. MiaB subfamily. Monomer. The cofactor is [4Fe-4S] cluster.

The protein localises to the cytoplasm. It catalyses the reaction N(6)-dimethylallyladenosine(37) in tRNA + (sulfur carrier)-SH + AH2 + 2 S-adenosyl-L-methionine = 2-methylsulfanyl-N(6)-dimethylallyladenosine(37) in tRNA + (sulfur carrier)-H + 5'-deoxyadenosine + L-methionine + A + S-adenosyl-L-homocysteine + 2 H(+). Its function is as follows. Catalyzes the methylthiolation of N6-(dimethylallyl)adenosine (i(6)A), leading to the formation of 2-methylthio-N6-(dimethylallyl)adenosine (ms(2)i(6)A) at position 37 in tRNAs that read codons beginning with uridine. The polypeptide is tRNA-2-methylthio-N(6)-dimethylallyladenosine synthase (Xylella fastidiosa (strain M12)).